Here is a 156-residue protein sequence, read N- to C-terminus: Probable chemoreceptor glutamine deamidase CheD (156 aa).

The protein belongs to the CheD family.

It catalyses the reaction L-glutaminyl-[protein] + H2O = L-glutamyl-[protein] + NH4(+). Its function is as follows. Probably deamidates glutamine residues to glutamate on methyl-accepting chemotaxis receptors (MCPs), playing an important role in chemotaxis. The protein is Probable chemoreceptor glutamine deamidase CheD of Sulfurimonas denitrificans (strain ATCC 33889 / DSM 1251) (Thiomicrospira denitrificans (strain ATCC 33889 / DSM 1251)).